The sequence spans 316 residues: Pantothenate kinase (316 aa).

95-102 (GSVAVGKS) is an ATP binding site.

Belongs to the prokaryotic pantothenate kinase family.

The protein localises to the cytoplasm. The catalysed reaction is (R)-pantothenate + ATP = (R)-4'-phosphopantothenate + ADP + H(+). The protein operates within cofactor biosynthesis; coenzyme A biosynthesis; CoA from (R)-pantothenate: step 1/5. In Shewanella pealeana (strain ATCC 700345 / ANG-SQ1), this protein is Pantothenate kinase.